The primary structure comprises 279 residues: S-formylglutathione hydrolase (279 aa).

Active-site charge relay system residues include Ser150, Asp226, and His258.

The protein belongs to the esterase D family.

The catalysed reaction is S-formylglutathione + H2O = formate + glutathione + H(+). Its function is as follows. Serine hydrolase involved in the detoxification of formaldehyde. Hydrolyzes S-formylglutathione to glutathione and formate. This chain is S-formylglutathione hydrolase (fghA), found in Paracoccus denitrificans (strain Pd 1222).